Reading from the N-terminus, the 221-residue chain is Large ribosomal subunit protein uL3 (221 aa).

The protein belongs to the universal ribosomal protein uL3 family. In terms of assembly, part of the 50S ribosomal subunit. Forms a cluster with proteins L14 and L19.

Its function is as follows. One of the primary rRNA binding proteins, it binds directly near the 3'-end of the 23S rRNA, where it nucleates assembly of the 50S subunit. In Nocardia farcinica (strain IFM 10152), this protein is Large ribosomal subunit protein uL3.